Reading from the N-terminus, the 154-residue chain is Interleukin-2 (154 aa).

The N-terminal stretch at 1–20 (MCKMQLLSCIALSLVLVANS) is a signal peptide. Threonine 23 is a glycosylation site (O-linked (GalNAc...) threonine). A disulfide bridge connects residues cysteine 78 and cysteine 126.

Belongs to the IL-2 family.

The protein localises to the secreted. Its function is as follows. Cytokine produced by activated CD4-positive helper T-cells and to a lesser extend activated CD8-positive T-cells and natural killer (NK) cells that plays pivotal roles in the immune response and tolerance. Binds to a receptor complex composed of either the high-affinity trimeric IL-2R (IL2RA/CD25, IL2RB/CD122 and IL2RG/CD132) or the low-affinity dimeric IL-2R (IL2RB and IL2RG). Interaction with the receptor leads to oligomerization and conformation changes in the IL-2R subunits resulting in downstream signaling starting with phosphorylation of JAK1 and JAK3. In turn, JAK1 and JAK3 phosphorylate the receptor to form a docking site leading to the phosphorylation of several substrates including STAT5. This process leads to activation of several pathways including STAT, phosphoinositide-3-kinase/PI3K and mitogen-activated protein kinase/MAPK pathways. Functions as a T-cell growth factor and can increase NK-cell cytolytic activity as well. Promotes strong proliferation of activated B-cells and subsequently immunoglobulin production. Plays a pivotal role in regulating the adaptive immune system by controlling the survival and proliferation of regulatory T-cells, which are required for the maintenance of immune tolerance. Moreover, participates in the differentiation and homeostasis of effector T-cell subsets, including Th1, Th2, Th17 as well as memory CD8-positive T-cells. This is Interleukin-2 (IL2) from Mirounga angustirostris (Northern elephant seal).